The primary structure comprises 162 residues: ATP-dependent Clp protease adapter protein CLPS1, chloroplastic (162 aa).

The N-terminal 58 residues, 1 to 58, are a transit peptide targeting the chloroplast; it reads MAASCLRPAPTASAQMMTRSPVAGLPRPCSALQRSGCTLQGAFGTFAPQTTRTFVVTW.

Belongs to the ClpS family.

The protein localises to the plastid. The protein resides in the chloroplast stroma. Functionally, small adapter protein that modulate the activity of plastid Clp protease system (CLPC). Probably involved in substrate selection for plastid CLPC. The protein is ATP-dependent Clp protease adapter protein CLPS1, chloroplastic of Chlamydomonas reinhardtii (Chlamydomonas smithii).